A 323-amino-acid polypeptide reads, in one-letter code: UPF0612 protein C569.01c (323 aa).

Coiled-coil stretches lie at residues 27-63 (IKRY…MKYE) and 131-225 (NEMN…DARS).

The protein belongs to the UPF0612 family.

In Schizosaccharomyces pombe (strain 972 / ATCC 24843) (Fission yeast), this protein is UPF0612 protein C569.01c.